A 369-amino-acid chain; its full sequence is Chaperone protein DnaJ (369 aa).

Positions 7–73 (DYYEILGVPR…QKRAMYDRFG (67 aa)) constitute a J domain. The segment at 143-225 (GAEIPVEYER…CGGSGRVLRK (83 aa)) adopts a CR-type zinc-finger fold. The Zn(2+) site is built by C156, C159, C173, C176, C199, C202, C213, and C216. CXXCXGXG motif repeat units lie at residues 156-163 (CPRCGGTG), 173-180 (CPSCGGTG), 199-206 (CERCGGTG), and 213-220 (CHECGGSG).

This sequence belongs to the DnaJ family. As to quaternary structure, homodimer. The cofactor is Zn(2+).

Its subcellular location is the cytoplasm. Participates actively in the response to hyperosmotic and heat shock by preventing the aggregation of stress-denatured proteins and by disaggregating proteins, also in an autonomous, DnaK-independent fashion. Unfolded proteins bind initially to DnaJ; upon interaction with the DnaJ-bound protein, DnaK hydrolyzes its bound ATP, resulting in the formation of a stable complex. GrpE releases ADP from DnaK; ATP binding to DnaK triggers the release of the substrate protein, thus completing the reaction cycle. Several rounds of ATP-dependent interactions between DnaJ, DnaK and GrpE are required for fully efficient folding. Also involved, together with DnaK and GrpE, in the DNA replication of plasmids through activation of initiation proteins. This Thermotoga maritima (strain ATCC 43589 / DSM 3109 / JCM 10099 / NBRC 100826 / MSB8) protein is Chaperone protein DnaJ.